The primary structure comprises 351 residues: dTDP-glucose 4,6-dehydratase (351 aa).

NAD(+) contacts are provided by residues 12-13 (FI), 32-35 (DALT), 58-59 (DI), 80-84 (FAAES), and threonine 99. Residue serine 84 coordinates substrate. Residue threonine 133 coordinates substrate. Aspartate 134 acts as the Proton donor in catalysis. Active-site proton acceptor residues include glutamate 135 and tyrosine 158. 158 to 162 (YSASK) serves as a coordination point for NAD(+). Asparagine 187 is a binding site for substrate. Position 188 (asparagine 188) interacts with NAD(+). Substrate contacts are provided by residues 197–198 (KL), 213–215 (PVY), arginine 222, asparagine 257, and 289–293 (DRPGH).

This sequence belongs to the NAD(P)-dependent epimerase/dehydratase family. dTDP-glucose dehydratase subfamily. As to quaternary structure, homodimer. The cofactor is NAD(+).

The enzyme catalyses dTDP-alpha-D-glucose = dTDP-4-dehydro-6-deoxy-alpha-D-glucose + H2O. The protein operates within carbohydrate biosynthesis; dTDP-L-rhamnose biosynthesis. Its pathway is bacterial outer membrane biogenesis; LPS O-antigen biosynthesis. Functionally, catalyzes the dehydration of dTDP-D-glucose to form dTDP-6-deoxy-D-xylo-4-hexulose via a three-step process involving oxidation, dehydration and reduction. The chain is dTDP-glucose 4,6-dehydratase (rfbB) from Xanthomonas campestris pv. campestris (strain ATCC 33913 / DSM 3586 / NCPPB 528 / LMG 568 / P 25).